Here is a 294-residue protein sequence, read N- to C-terminus: Bifunctional protein FolD (294 aa).

Residues 166 to 168 (GRS), serine 191, and isoleucine 232 contribute to the NADP(+) site.

The protein belongs to the tetrahydrofolate dehydrogenase/cyclohydrolase family. Homodimer.

It catalyses the reaction (6R)-5,10-methylene-5,6,7,8-tetrahydrofolate + NADP(+) = (6R)-5,10-methenyltetrahydrofolate + NADPH. The catalysed reaction is (6R)-5,10-methenyltetrahydrofolate + H2O = (6R)-10-formyltetrahydrofolate + H(+). It functions in the pathway one-carbon metabolism; tetrahydrofolate interconversion. Catalyzes the oxidation of 5,10-methylenetetrahydrofolate to 5,10-methenyltetrahydrofolate and then the hydrolysis of 5,10-methenyltetrahydrofolate to 10-formyltetrahydrofolate. In Bradyrhizobium sp. (strain BTAi1 / ATCC BAA-1182), this protein is Bifunctional protein FolD.